The primary structure comprises 438 residues: DNA primase DnaG (438 aa).

The 75-residue stretch at 169–243 (DSIIVVEGRA…DIDYVARAPY (75 aa)) folds into the Toprim domain. Residues Glu-175, Asp-217, and Asp-219 each coordinate Mg(2+).

This sequence belongs to the archaeal DnaG primase family. In terms of assembly, forms a ternary complex with MCM helicase and DNA. Requires Mg(2+) as cofactor.

The enzyme catalyses ssDNA + n NTP = ssDNA/pppN(pN)n-1 hybrid + (n-1) diphosphate.. Its function is as follows. RNA polymerase that catalyzes the synthesis of short RNA molecules used as primers for DNA polymerase during DNA replication. The chain is DNA primase DnaG from Methanococcus maripaludis (strain C5 / ATCC BAA-1333).